We begin with the raw amino-acid sequence, 97 residues long: Large ribosomal subunit protein eL21 (97 aa).

The protein belongs to the eukaryotic ribosomal protein eL21 family.

This is Large ribosomal subunit protein eL21 from Methanococcus vannielii (strain ATCC 35089 / DSM 1224 / JCM 13029 / OCM 148 / SB).